Reading from the N-terminus, the 238-residue chain is tRNA (guanine-N(1)-)-methyltransferase (238 aa).

S-adenosyl-L-methionine is bound by residues G112 and L131–L136.

The protein belongs to the RNA methyltransferase TrmD family. In terms of assembly, homodimer.

It is found in the cytoplasm. The enzyme catalyses guanosine(37) in tRNA + S-adenosyl-L-methionine = N(1)-methylguanosine(37) in tRNA + S-adenosyl-L-homocysteine + H(+). Specifically methylates guanosine-37 in various tRNAs. The polypeptide is tRNA (guanine-N(1)-)-methyltransferase (Nostoc punctiforme (strain ATCC 29133 / PCC 73102)).